Reading from the N-terminus, the 906-residue chain is Protein translocase subunit SecA (906 aa).

ATP contacts are provided by residues Q86, 104–108 (GEGKT), and D499. A disordered region spans residues 863–885 (PVVSRIDPKDRNPDDPTSWGRVS). The Zn(2+) site is built by C890, C892, C901, and H902.

This sequence belongs to the SecA family. Monomer and homodimer. Part of the essential Sec protein translocation apparatus which comprises SecA, SecYEG and auxiliary proteins SecDF-YajC and YidC. It depends on Zn(2+) as a cofactor.

It localises to the cell inner membrane. It is found in the cytoplasm. It catalyses the reaction ATP + H2O + cellular proteinSide 1 = ADP + phosphate + cellular proteinSide 2.. In terms of biological role, part of the Sec protein translocase complex. Interacts with the SecYEG preprotein conducting channel. Has a central role in coupling the hydrolysis of ATP to the transfer of proteins into and across the cell membrane, serving both as a receptor for the preprotein-SecB complex and as an ATP-driven molecular motor driving the stepwise translocation of polypeptide chains across the membrane. The protein is Protein translocase subunit SecA of Rickettsia akari (strain Hartford).